The sequence spans 426 residues: Histidine--tRNA ligase (426 aa).

Belongs to the class-II aminoacyl-tRNA synthetase family. Homodimer.

It is found in the cytoplasm. The enzyme catalyses tRNA(His) + L-histidine + ATP = L-histidyl-tRNA(His) + AMP + diphosphate + H(+). The sequence is that of Histidine--tRNA ligase from Corynebacterium kroppenstedtii (strain DSM 44385 / JCM 11950 / CIP 105744 / CCUG 35717).